A 162-amino-acid polypeptide reads, in one-letter code: NADH-quinone oxidoreductase subunit I 2 (162 aa).

4Fe-4S ferredoxin-type domains follow at residues 52-82 and 93-122; these read LRRY…IEAG and VRYD…EGPN. Residues cysteine 62, cysteine 65, cysteine 68, cysteine 72, cysteine 102, cysteine 105, cysteine 108, and cysteine 112 each contribute to the [4Fe-4S] cluster site.

This sequence belongs to the complex I 23 kDa subunit family. As to quaternary structure, NDH-1 is composed of 14 different subunits. Subunits NuoA, H, J, K, L, M, N constitute the membrane sector of the complex. [4Fe-4S] cluster is required as a cofactor.

Its subcellular location is the cell inner membrane. It catalyses the reaction a quinone + NADH + 5 H(+)(in) = a quinol + NAD(+) + 4 H(+)(out). In terms of biological role, NDH-1 shuttles electrons from NADH, via FMN and iron-sulfur (Fe-S) centers, to quinones in the respiratory chain. The immediate electron acceptor for the enzyme in this species is believed to be ubiquinone. Couples the redox reaction to proton translocation (for every two electrons transferred, four hydrogen ions are translocated across the cytoplasmic membrane), and thus conserves the redox energy in a proton gradient. In Rhodopseudomonas palustris (strain HaA2), this protein is NADH-quinone oxidoreductase subunit I 2.